The primary structure comprises 1042 residues: Starch synthase 3, chloroplastic/amyloplastic (1042 aa).

The transit peptide at 1–44 (MISYFLNQDFSRKKQGRMAASGPKSSGPRGFGRRTTVGSAQKRT) directs the protein to the chloroplast. The interval 1-63 (MISYFLNQDF…NATSTATNEV (63 aa)) is disordered. Over residues 54–63 (NATSTATNEV) the composition is skewed to polar residues. The stretch at 247 to 302 (ENFLLEEKLREQEKLAKEEAERERQKEEKRRIEAQKAAIEADRAQAKAETQKRREL) forms a coiled coil. ADP-alpha-D-glucose is bound at residue Lys-608.

This sequence belongs to the glycosyltransferase 1 family. Bacterial/plant glycogen synthase subfamily. Expressed in leaves and flowers.

It localises to the plastid. Its subcellular location is the chloroplast. The protein localises to the amyloplast. The catalysed reaction is [(1-&gt;4)-alpha-D-glucosyl](n) + ADP-alpha-D-glucose = [(1-&gt;4)-alpha-D-glucosyl](n+1) + ADP + H(+). It functions in the pathway glycan biosynthesis; starch biosynthesis. Functionally, involved in the synthesis of glycan chains within amylopectin in leaves. May play a regulatory role in the control of starch accumulation in plastids. The chain is Starch synthase 3, chloroplastic/amyloplastic (SS3) from Arabidopsis thaliana (Mouse-ear cress).